A 509-amino-acid polypeptide reads, in one-letter code: Zinc finger CCCH-type with G patch domain-containing protein (509 aa).

The C3H1-type zinc-finger motif lies at 155-178 (PCNYYLEGECRFDEIRCRYSHGAL). Residues 254-277 (EDELTSEDSSSSPHDESSDEIDSD) form a disordered region. The G-patch domain occupies 310–356 (TRGIGSKLMEKMGYIHGTGLGSEGRGIVTPVSAQILPQGRSLDACME). The interval 407–430 (LGGGESRHQGDQAAKKAKTNDLQQ) is disordered. Over residues 411–420 (ESRHQGDQAA) the composition is skewed to basic and acidic residues.

It localises to the nucleus. Functionally, transcription repressor. The chain is Zinc finger CCCH-type with G patch domain-containing protein from Drosophila pseudoobscura pseudoobscura (Fruit fly).